The sequence spans 320 residues: MPMYQVKPYHGGGAPLRVELPTCMYRLPNVHGRSYGPAPGAGHVQEESNLSLQALESRQDDILKRLYELKAAVDGLSKMIQTPDADLDVTNIIQADEPTTLTTNALDLNSVLGKDYGALKDIVINANPASPPLSLLVLHRLLCEHFRVLSTVHTHSSVKSVPENLLKCFGEQNKKQPRQDYQLGFTLIWKNVPKTQMKFSIQTMCPIEGEGNIARFLFSLFGQKHNAVNATLIDSWVDIAIFQLKEGSSKEKAAVFRSMNSALGKSPWLAGNELTVADVVLWSVLQQIGGCSVTVPANVQRWMRSCENLAPFNTALKLLK.

The interval 82–162 is interaction with PRKN; it reads TPDADLDVTN…HTHSSVKSVP (81 aa). The segment at 162-225 is interaction with TP53; it reads PENLLKCFGE…FLFSLFGQKH (64 aa). The 98-residue stretch at 220–317 folds into the GST C-terminal domain; sequence LFGQKHNAVN…NLAPFNTALK (98 aa).

Part of the multisynthetase complex (MSC), a multisubunit complex that groups tRNA ligases for Arg (RARS1), Asp (DARS1), Gln (QARS1), Ile (IARS1), Leu (LARS1), Lys (KARS1), Met (MARS1) the bifunctional ligase for Glu and Pro (EPRS1) and the auxiliary subunits AIMP1/p43, AIMP2/p38 and EEF1E1/p18. Interacts (via N-terminus) with KARS1. Interacts with EPRS1. Forms a linear complex that contains MARS1, EEF1E1, EPRS1 and AIMP2 that is at the core of the multisubunit complex. Binds FUBP1 (via C-terminus). Interacts in both its unphosphorylated and phosphorylated forms with p53/TP53 (via N-terminus) in the nucleus following UV irradiation. Interacts (via N-terminus) with PRKN/parkin (via first RING-type domain). Interacts with TARS3. Post-translationally, phosphorylated on serine residues in response to UV irradiation. In terms of processing, ubiquitinated by PRKN, leading to its degradation by the proteasome. Mutant PRKN fails to ubiquitinate AIMP2 efficiently, allowing its accumulation which may contribute to neurodegeneration associated with Parkinson disease.

The protein resides in the cytoplasm. It is found in the cytosol. It localises to the nucleus. Its function is as follows. Required for assembly and stability of the aminoacyl-tRNA synthase complex. Mediates ubiquitination and degradation of FUBP1, a transcriptional activator of MYC, leading to MYC down-regulation which is required for aveolar type II cell differentiation. Blocks MDM2-mediated ubiquitination and degradation of p53/TP53. Functions as a proapoptotic factor. This Homo sapiens (Human) protein is Aminoacyl tRNA synthase complex-interacting multifunctional protein 2 (AIMP2).